The primary structure comprises 100 residues: Small ribosomal subunit protein uS14c (100 aa).

The protein belongs to the universal ribosomal protein uS14 family. As to quaternary structure, part of the 30S ribosomal subunit.

The protein localises to the plastid. The protein resides in the chloroplast. Its function is as follows. Binds 16S rRNA, required for the assembly of 30S particles. The polypeptide is Small ribosomal subunit protein uS14c (Fagopyrum esculentum subsp. ancestrale (Wild buckwheat)).